A 684-amino-acid chain; its full sequence is Extracellular lipase (684 aa).

Residues 1-48 (MKKKLIYAAVVSALLAGCGGSDDNKGDTSSYLDYLLTGSNAVGPSALA) form the signal peptide. 2 disordered regions span residues 321-405 (SIPV…ADWG) and 462-493 (QRER…GDRS). Basic and acidic residues predominate over residues 385 to 405 (ADCRSDPPERAAGRGEQADWG). The Nucleophile role is filled by serine 568.

This sequence belongs to the AB hydrolase superfamily. Lipase family. As to quaternary structure, monomer.

Its subcellular location is the secreted. It catalyses the reaction a triacylglycerol + H2O = a diacylglycerol + a fatty acid + H(+). Its function is as follows. The optimum chain lengths for the acyl moiety is C6 for ester hydrolysis and C6 and C8 for triacylglycerol hydrolysis. The protein is Extracellular lipase of Aeromonas hydrophila.